An 84-amino-acid polypeptide reads, in one-letter code: Large ribosomal subunit protein uL29 (84 aa).

The protein belongs to the universal ribosomal protein uL29 family.

The protein is Large ribosomal subunit protein uL29 of Mycoplasma mobile (strain ATCC 43663 / 163K / NCTC 11711) (Mesomycoplasma mobile).